The chain runs to 194 residues: Coiled-coil domain-containing protein 184 (194 aa).

The stretch at 39 to 68 forms a coiled coil; the sequence is GMKELMEHLKAQLQALFEDVRAMRGALDEQ. The segment at 101 to 176 is disordered; it reads GLGVVGGKGS…LLGGDGPLVE (76 aa). Acidic residues predominate over residues 135 to 145; it reads PEDEEEEEEEK.

This is Coiled-coil domain-containing protein 184 (CCDC184) from Homo sapiens (Human).